We begin with the raw amino-acid sequence, 1543 residues long: ATP-binding cassette sub-family C member 2 (1543 aa).

Residues 1-26 (MDEFCNSTFWNLSLLKSPEADLPLCF) lie on the Extracellular side of the membrane. 2 N-linked (GlcNAc...) asparagine glycosylation sites follow: Asn-6 and Asn-11. The helical transmembrane segment at 27–47 (EQTVLVWIPLGFLWLLAPWQL) threads the bilayer. Residues 48–67 (YRIYRSRTKRFAITKFYLAK) lie on the Cytoplasmic side of the membrane. Residues 68 to 88 (QVFVVCLLILAAIDLSLALTE) traverse the membrane as a helical segment. Topologically, residues 89 to 92 (DTGQ) are extracellular. A helical transmembrane segment spans residues 93-113 (ATIPPVKYTNPILYLCTWLLV). Residues 114 to 125 (LVIQHCRQCCIQ) are Cytoplasmic-facing. Residues 126–146 (KNSWFLSMFWILSLLCGIFQF) form a helical membrane-spanning segment. The Extracellular segment spans residues 147–164 (QTLIRALLQDSKSNMTYS). Residue Asn-160 is glycosylated (N-linked (GlcNAc...) asparagine). A helical transmembrane segment spans residues 165–185 (CLFFVSYGFQIVILILSAFSE). Topologically, residues 186-311 (SSDSTHAPSA…DFPKSWLVKA (126 aa)) are cytoplasmic. A disordered region spans residues 260 to 285 (LKKSQQSPEGTSHGLTKKQSQSQDVL). The segment covering 263 to 283 (SQQSPEGTSHGLTKKQSQSQD) has biased composition (polar residues). A phosphoserine mark is found at Ser-279 and Ser-281. A helical transmembrane segment spans residues 312 to 332 (LFKTFYVVILKSFILKLAHDI). In terms of domain architecture, ABC transmembrane type-1 1 spans 320 to 603 (ILKSFILKLA…LPMVISSVIQ (284 aa)). Topologically, residues 333-358 (LLFLNPQLLKFLIGFVKDPDSYPWVG) are extracellular. A helical transmembrane segment spans residues 359–379 (YIYAILMFSVTLIQSFFLQCY). Residues 380-435 (FQFCFVLGMTVRTTIIASVYKKALTLSNLARRQYTIGETVNLMSVDSQKLMDVTNY) are Cytoplasmic-facing. The helical transmembrane segment at 436–456 (IHLLWSSVLQIALSIFFLWRE) threads the bilayer. At 457 to 459 (LGP) the chain is on the extracellular side. Residues 460–480 (SILAGVGLMVLLVPVNGVLAT) form a helical membrane-spanning segment. Over 481–542 (KIRKIQVQNM…NLLRFSQLQT (62 aa)) the chain is Cytoplasmic. Residues 543–563 (ILIFILHLTPTLVSVITFSVY) form a helical membrane-spanning segment. Over 564–585 (VLVDSQNVLNAEKAFTSITLFN) the chain is Extracellular. A helical membrane pass occupies residues 586-606 (ILRFPLAMLPMVISSVIQASV). Residues 607–969 (SVDRLEQYLG…VKFSIYLKYL (363 aa)) are Cytoplasmic-facing. In terms of domain architecture, ABC transporter 1 spans 635–859 (VQFSEASFTW…KGVFAKNWKT (225 aa)). 669-676 (GTVGSGKS) serves as a coordination point for ATP. Ser-876 carries the phosphoserine modification. The interval 903 to 927 (RENSLRRTLSRSSRSGSRRGKSLKS) is disordered. Low complexity predominate over residues 908 to 917 (RRTLSRSSRS). Phosphoserine is present on residues Ser-924 and Ser-928. Residues 970-990 (QAVGWWSLLFIVIFYVLNYVA) traverse the membrane as a helical segment. The ABC transmembrane type-1 2 domain maps to 977–1262 (LLFIVIFYVL…LVRMTSEVET (286 aa)). At 991-1031 (FIGTNLWLSAWTSDSEKQNGTDNSPSQRDMRIGVFGALGIA) the chain is on the extracellular side. The N-linked (GlcNAc...) asparagine glycan is linked to Asn-1009. Residues 1032–1052 (QGIFLLSSSLWSIYACRNASK) traverse the membrane as a helical segment. Residues 1053 to 1095 (TLHRQLLTNILRAPMSFFDTTPTGRIVNRFAGDISTVDDTLPQ) are Cytoplasmic-facing. The chain crosses the membrane as a helical span at residues 1096–1116 (TLRSWLLCFFGIVSTLVMICM). Residue Ala-1117 is a topological domain, extracellular. Residues 1118-1138 (TPIFIIIIIPLSILYVSVQVF) traverse the membrane as a helical segment. Over 1139–1209 (YVATSRQLRR…TSNRWLAIRL (71 aa)) the chain is Cytoplasmic. A helical transmembrane segment spans residues 1210-1230 (ELVGNLIVFCSALLLVIYKNS). Topologically, residues 1231–1232 (LT) are extracellular. The helical transmembrane segment at 1233-1253 (GDTVGFVLSNALNITQTLNWL) threads the bilayer. At 1254 to 1543 (VRMTSEVETN…GIESVNHTEL (290 aa)) the chain is on the cytoplasmic side. One can recognise an ABC transporter 2 domain in the interval 1298-1532 (IQFNNYQVRY…MGPFYLMAKE (235 aa)). An ATP-binding site is contributed by 1332 to 1339 (GRTGAGKS). Ser-1436 is modified (phosphoserine).

Belongs to the ABC transporter superfamily. ABCC family. Conjugate transporter (TC 3.A.1.208) subfamily. As to expression, expressed in liver.

It is found in the apical cell membrane. It carries out the reaction an S-substituted glutathione(in) + ATP + H2O = an S-substituted glutathione(out) + ADP + phosphate + H(+). The catalysed reaction is taurolithocholate 3-sulfate(in) + ATP + H2O = taurolithocholate 3-sulfate(out) + ADP + phosphate + H(+). It catalyses the reaction ATP + H2O + xenobioticSide 1 = ADP + phosphate + xenobioticSide 2.. The enzyme catalyses leukotriene C4(in) + ATP + H2O = leukotriene C4(out) + ADP + phosphate + H(+). It carries out the reaction 17beta-estradiol 17-O-(beta-D-glucuronate)(in) + ATP + H2O = 17beta-estradiol 17-O-(beta-D-glucuronate)(out) + ADP + phosphate + H(+). The catalysed reaction is (4Z,15Z)-bilirubin IXalpha C8-beta-D-glucuronoside(in) + ATP + H2O = (4Z,15Z)-bilirubin IXalpha C8-beta-D-glucuronoside(out) + ADP + phosphate + H(+). It catalyses the reaction (4Z,15Z)-bilirubin IXalpha C8,C12-beta-D-bisglucuronoside(in) + ATP + H2O = (4Z,15Z)-bilirubin IXalpha C8,C12-beta-D-bisglucuronoside(out) + ADP + phosphate + H(+). ATP-dependent transporter of the ATP-binding cassette (ABC) family that binds and hydrolyzes ATP to enable active transport of various substrates including many drugs, toxicants and endogenous compound across cell membranes. Transports a wide variety of conjugated organic anions such as sulfate-, glucuronide- and glutathione (GSH)-conjugates of endo- and xenobiotics substrates. Mediates hepatobiliary excretion of mono- and bis-glucuronidated bilirubin molecules and therefore play an important role in bilirubin detoxification. Mediates also hepatobiliary excretion of others glucuronide conjugates such as 17beta-estradiol 17-glucosiduronic acid and leukotriene C4. Transports sulfated bile salt such as taurolithocholate sulfate. Transports various anticancer drugs, such as anthracycline, vinca alkaloid and methotrexate and HIV-drugs such as protease inhibitors. The chain is ATP-binding cassette sub-family C member 2 from Mus musculus (Mouse).